We begin with the raw amino-acid sequence, 508 residues long: Photosystem II CP47 reaction center protein (508 aa).

The next 6 membrane-spanning stretches (helical) occupy residues 21 to 36 (SVHIMHTALVAGWAGS), 101 to 115 (IVFSGLCFLAAIWHW), 140 to 156 (GIHLFLSGVACFGFGAF), 203 to 218 (IAAGTLGILAGLFHLS), 237 to 252 (VLSSSIAAVFFAAFVV), and 457 to 472 (SFALLFFFGHIWHGAR).

Belongs to the PsbB/PsbC family. PsbB subfamily. In terms of assembly, PSII is composed of 1 copy each of membrane proteins PsbA, PsbB, PsbC, PsbD, PsbE, PsbF, PsbH, PsbI, PsbJ, PsbK, PsbL, PsbM, PsbT, PsbX, PsbY, PsbZ, Psb30/Ycf12, at least 3 peripheral proteins of the oxygen-evolving complex and a large number of cofactors. It forms dimeric complexes. It depends on Binds multiple chlorophylls. PSII binds additional chlorophylls, carotenoids and specific lipids. as a cofactor.

It localises to the plastid. It is found in the chloroplast thylakoid membrane. One of the components of the core complex of photosystem II (PSII). It binds chlorophyll and helps catalyze the primary light-induced photochemical processes of PSII. PSII is a light-driven water:plastoquinone oxidoreductase, using light energy to abstract electrons from H(2)O, generating O(2) and a proton gradient subsequently used for ATP formation. The polypeptide is Photosystem II CP47 reaction center protein (Gossypium hirsutum (Upland cotton)).